The sequence spans 267 residues: Thiamine pyrophosphokinase 1 (267 aa).

Belongs to the thiamine pyrophosphokinase family. As to expression, expressed in roots, leaves and flowers.

It is found in the cytoplasm. The protein localises to the cytosol. It carries out the reaction thiamine + ATP = thiamine diphosphate + AMP + H(+). The protein operates within cofactor biosynthesis; thiamine diphosphate biosynthesis; thiamine diphosphate from thiamine: step 1/1. In terms of biological role, catalyzes the phosphorylation of thiamine to thiamine pyrophosphate (TPP). TPP is an active cofactor for enzymes involved in glycolysis and energy production. Plant leaves require high levels of TPP for photosynthesis and carbohydrate metabolism. In Arabidopsis thaliana (Mouse-ear cress), this protein is Thiamine pyrophosphokinase 1.